We begin with the raw amino-acid sequence, 382 residues long: B3 domain-containing protein Os03g0622100 (382 aa).

Residues Cys29 to Ser123 constitute a DNA-binding region (TF-B3 1). 2 stretches are compositionally biased toward basic and acidic residues: residues Arg136–Gly158 and Gln193–Gly202. The interval Arg136–Arg222 is disordered. The segment covering Asp203 to Asp218 has biased composition (acidic residues). Residues Lys261–Arg363 constitute a DNA-binding region (TF-B3 2).

The protein localises to the nucleus. This chain is B3 domain-containing protein Os03g0622100, found in Oryza sativa subsp. japonica (Rice).